Here is a 420-residue protein sequence, read N- to C-terminus: Membrane protein UL43 homolog (420 aa).

11 helical membrane passes run 58-78 (IFSIAAHLAITLSCITLIQFI), 81-101 (KIIYINCTIYAITGFLIAFIV), 114-134 (IGKPAQFIFALISSIADTLIT), 157-177 (LMCFVMLGAFIASYHYVCLAT), 181-201 (LTWKAGFLILTAGTIIGISAP), 203-223 (GNISSLFGFLFLYTILAINVV), 278-298 (QIPMVVMSHATGVLIPVVIAL), 312-332 (TDMLQGVCGVLVGASVSIFIP), 343-363 (IIILLSIIGAMAITLAGFGLV), 364-384 (LGPTLFSACAAALSCYTCINI), and 399-419 (VVKSILGFIITSLLVCILVAL).

Belongs to the alphaherpesvirinae HHV-1 UL43 family.

The protein localises to the host membrane. The polypeptide is Membrane protein UL43 homolog (MDV056) (Gallus gallus (Chicken)).